Here is a 269-residue protein sequence, read N- to C-terminus: Hemin import ATP-binding protein HmuV (269 aa).

An ABC transporter domain is found at 5-242; that stretch reads IETHSVTMRI…GLIRKVFEVC (238 aa). Residue 37-44 coordinates ATP; that stretch reads GPNGAGKS.

It belongs to the ABC transporter superfamily. Heme (hemin) importer (TC 3.A.1.14.5) family. In terms of assembly, the complex is composed of two ATP-binding proteins (HmuV), two transmembrane proteins (HmuU) and a solute-binding protein (HmuT).

The protein resides in the cell inner membrane. Its function is as follows. Part of the ABC transporter complex HmuTUV involved in hemin import. Responsible for energy coupling to the transport system. The polypeptide is Hemin import ATP-binding protein HmuV (Nitrobacter winogradskyi (strain ATCC 25391 / DSM 10237 / CIP 104748 / NCIMB 11846 / Nb-255)).